Here is a 237-residue protein sequence, read N- to C-terminus: Uridylate kinase (237 aa).

ATP is bound at residue 12–15; sequence KISG. Position 54 (glycine 54) interacts with UMP. 2 residues coordinate ATP: glycine 55 and arginine 59. UMP is bound by residues aspartate 72 and 133–140; that span reads TGNPFFST. ATP-binding residues include tyrosine 166 and aspartate 169.

The protein belongs to the UMP kinase family. As to quaternary structure, homohexamer.

The protein resides in the cytoplasm. It catalyses the reaction UMP + ATP = UDP + ADP. It participates in pyrimidine metabolism; CTP biosynthesis via de novo pathway; UDP from UMP (UMPK route): step 1/1. With respect to regulation, inhibited by UTP. Catalyzes the reversible phosphorylation of UMP to UDP. In Caldanaerobacter subterraneus subsp. tengcongensis (strain DSM 15242 / JCM 11007 / NBRC 100824 / MB4) (Thermoanaerobacter tengcongensis), this protein is Uridylate kinase.